A 384-amino-acid polypeptide reads, in one-letter code: MNRIWLRAIILTASSALLAGCQFGGLNSLPLPGTAGHGEGAYSVTVEMADVATLPQNSPVMVDDVTVGSVAGIVAVQRPDGSFYAAVKLDLDKNVLLPANAVAKVSQTSLLGSLHVELAPPTDRPPTGRLVDGSRITEANTDRFPTTEEVFSALGVVVNKGNVGALEEIIDETHQAVAGRQAQFVNLVPRLAELTAGLNRQVHDIIDALDGLNRVSAILARDKDNLGRALDTLPDAVRVLNQNRDHIVDAFAALKRLTMVTSHVLAETKVDFGEDLKDLYSIVKALNDDRKDFVTSLQLLLTFPFPNFGIKQAVRGDYLNVFTTFDLTLRRIGETFFTTAYFDPNMAHMDEILNPPDFLIGELANLSGQAADPFKIPPGTASGQ.

A signal peptide spans 1–20 (MNRIWLRAIILTASSALLAG). Cys21 carries N-palmitoyl cysteine lipidation. Cys21 is lipidated: S-diacylglycerol cysteine.

Lipidated upon expression in E.coli.

The protein resides in the cell membrane. Its function is as follows. Stimulates the host (mouse) immune response; lipidated protein produced in E.coli stimulates T-cell proliferation in mice previously sensitized with LprN. Spleenocytes from these mice produce increased amounts of TNF-alpha and IFN-gamma, as well as somewhat increased nitric oxide levels, upon subsequent challenge with LprN. Previously sensitized mice infected with M.tuberculosis have an exacerbated disease response, suggesting this lipoprotein may down-regulate the host's immune response. This is Lipoprotein LprN (lprN) from Mycobacterium tuberculosis (strain ATCC 25618 / H37Rv).